A 137-amino-acid polypeptide reads, in one-letter code: DNA-binding protein H-NS (137 aa).

Residues Gln-112 to Ala-117 mediate DNA binding.

This sequence belongs to the histone-like protein H-NS family. In terms of assembly, homodimer that oligomerizes on DNA into higher-order complexes that form bridges between disparate regions of DNA compacting it. Interacts with Hha, Cnu and StpA.

It is found in the cytoplasm. Its subcellular location is the nucleoid. Its function is as follows. A DNA-binding protein implicated in transcriptional repression and chromosome organization and compaction. Binds nucleation sites in AT-rich DNA and bridges them, forming higher-order nucleoprotein complexes and condensing the chromosome. As many horizontally transferred genes are AT-rich, it plays a central role in silencing foreign genes. A subset of genes are repressed by H-NS in association with other proteins. The polypeptide is DNA-binding protein H-NS (hns) (Escherichia coli O6:H1 (strain CFT073 / ATCC 700928 / UPEC)).